Here is a 342-residue protein sequence, read N- to C-terminus: Anthranilate phosphoribosyltransferase (342 aa).

5-phospho-alpha-D-ribose 1-diphosphate is bound by residues glycine 81, 84–85 (GD), 91–94 (NVSS), 109–117 (KHGNRGVSS), and serine 121. Glycine 81 provides a ligand contact to anthranilate. Serine 93 contributes to the Mg(2+) binding site. Asparagine 112 serves as a coordination point for anthranilate. Arginine 167 is a binding site for anthranilate. Residues aspartate 226 and glutamate 227 each contribute to the Mg(2+) site.

The protein belongs to the anthranilate phosphoribosyltransferase family. Homodimer. The cofactor is Mg(2+).

The catalysed reaction is N-(5-phospho-beta-D-ribosyl)anthranilate + diphosphate = 5-phospho-alpha-D-ribose 1-diphosphate + anthranilate. It participates in amino-acid biosynthesis; L-tryptophan biosynthesis; L-tryptophan from chorismate: step 2/5. Its function is as follows. Catalyzes the transfer of the phosphoribosyl group of 5-phosphorylribose-1-pyrophosphate (PRPP) to anthranilate to yield N-(5'-phosphoribosyl)-anthranilate (PRA). The chain is Anthranilate phosphoribosyltransferase from Marinobacter nauticus (strain ATCC 700491 / DSM 11845 / VT8) (Marinobacter aquaeolei).